A 775-amino-acid chain; its full sequence is Serine/threonine-protein kinase-like protein CCR1 (775 aa).

An N-terminal signal peptide occupies residues M1 to G23. At F24–L439 the chain is on the extracellular side. N57, N102, N167, N213, N220, N241, N261, N292, N328, and N360 each carry an N-linked (GlcNAc...) asparagine glycan. A TNFR-Cys repeat occupies P351–C406. 3 disulfides stabilise this stretch: C352–C381, C384–C398, and C388–C406. N414 is a glycosylation site (N-linked (GlcNAc...) asparagine). Residues V440–V460 traverse the membrane as a helical segment. The Cytoplasmic portion of the chain corresponds to P461–F775. In terms of domain architecture, Protein kinase spans F520–R770. Residues L526 to V534 and K548 each bind ATP. The active-site Proton acceptor is the D645.

The protein belongs to the protein kinase superfamily. Ser/Thr protein kinase family. As to quaternary structure, homodimer. In terms of tissue distribution, expressed in roots, leaves, shoot apical meristems (SAM), and floral buds.

The protein localises to the membrane. It carries out the reaction L-seryl-[protein] + ATP = O-phospho-L-seryl-[protein] + ADP + H(+). The enzyme catalyses L-threonyl-[protein] + ATP = O-phospho-L-threonyl-[protein] + ADP + H(+). Functionally, serine/threonine-protein kinase with low activity. The chain is Serine/threonine-protein kinase-like protein CCR1 (CCR1) from Arabidopsis thaliana (Mouse-ear cress).